A 354-amino-acid chain; its full sequence is Selection and upkeep of intraepithelial T-cells protein 10 (354 aa).

A signal peptide spans 1 to 52 (MFLRTQMEQSQADIFALIKPHFGVMESSASYLPGFFMTFLLLQTTVLTQAMS). An Ig-like V-type domain is found at 53–141 (LDIQINIQVP…TNREKKRSVV (89 aa)). Residues 53–158 (LDIQINIQVP…SEYMSLMSNK (106 aa)) lie on the Extracellular side of the membrane. A disulfide bond links C71 and C125. An N-linked (GlcNAc...) asparagine glycan is attached at N129. Residues 159-179 (FSCPLTYLFIIIFLNCLKGML) traverse the membrane as a helical segment. The Cytoplasmic segment spans residues 180–209 (DFCCLKGKPVYFRELINKIKEVLNIKMRAC). The helical transmembrane segment at 210-230 (CTLIWEFLLIVLYIAFLPFYL) threads the bilayer. Residues 231–252 (KFRSRASILDDAYPLHSNWLWD) are Extracellular-facing. The helical transmembrane segment at 253–273 (ICIVLSVLMIFFTGLSLFLLW) threads the bilayer. Residues 274–354 (TLNCYGQMSY…RLDCSLNWKT (81 aa)) are Cytoplasmic-facing.

The protein belongs to the SKINT family. As to expression, expressed in skin and thymus.

The protein localises to the membrane. May act by engaging a cell surface molecule on immature T-cells in the embryonic thymus. The chain is Selection and upkeep of intraepithelial T-cells protein 10 (Skint10) from Mus musculus (Mouse).